A 150-amino-acid polypeptide reads, in one-letter code: Putative F-box protein At2g33655 (150 aa).

Residues 1-47 (MEKMSDLPRELVEEILSRVPVKSMREVRVTCKTWNALSKHISKAEAA) form the F-box domain.

The polypeptide is Putative F-box protein At2g33655 (Arabidopsis thaliana (Mouse-ear cress)).